The sequence spans 261 residues: MIIDLHVQRYGPSGPARVLTIHGVTEHGRIWHRLAHHLPEIPIAAPDLLGHGRSPWAAPWTIDANVSALAALLDNQGDGPVVVVGHSFGGAVAMHLAAARPDQVAALVLLDPAVALDGSRVREVVDAMLASPDYLDPAEARAEKATGAWADVDPPVLDAELDEHLVALPNGRYGWRISLPAMVCYWSELARDIVLPPVGTATTLVRAVRASPAYVSDQLLAALDKRLGADFELLDFDCGHMVPQAKPTEVAAVIRSRLGPR.

Residue Ser-87 is the Nucleophile of the active site. Active-site charge relay system residues include Asp-217 and His-240.

The protein belongs to the AB hydrolase superfamily.

The catalysed reaction is a carboxylic ester + H2O = an alcohol + a carboxylate + H(+). It carries out the reaction a tetradecanoate ester + H2O = an aliphatic alcohol + tetradecanoate + H(+). It catalyses the reaction decanoate ester + H2O = decanoate + an aliphatic alcohol + H(+). The enzyme catalyses an octanoate ester + H2O = an aliphatic alcohol + octanoate + H(+). The catalysed reaction is a dodecanoate ester + H2O = an aliphatic alcohol + dodecanoate + H(+). It carries out the reaction a butanoate ester + H2O = an aliphatic alcohol + butanoate + H(+). It catalyses the reaction hexadecanoate ester + H2O = an aliphatic alcohol + hexadecanoate + H(+). The enzyme catalyses octadecanoate ester + H2O = an aliphatic alcohol + octadecanoate + H(+). Is inhibited by tetrahydrolipstatin, a specific lipase inhibitor and RHC 80267, a diacylglycerol lipase inhibitor, but not by phenylglyoxal and iodoacetate. Its function is as follows. Lipase that displays broad substrate specificity and preferentially hydrolyzes p-nitrophenyl myristate in vitro. Also shows significant activity with pNP-butyrate (68%), pNP-octanoate (82%), pNP-decanoate (90%), and pNP-laurate (74%). Is probably involved in lipid catabolism. Is active at low pH, and might play some important role in mycobacterial biology in macrophages where the bacteria encounters acidic stress. The polypeptide is Lipase LipV (Mycobacterium tuberculosis (strain ATCC 25618 / H37Rv)).